The following is a 148-amino-acid chain: UPF0260 protein YcgN (148 aa).

The protein belongs to the UPF0260 family.

The protein is UPF0260 protein YcgN of Salmonella paratyphi A (strain AKU_12601).